Reading from the N-terminus, the 943-residue chain is MTDYKATLNLPDTQFPMKAGLPQREPQTLQRWNEIGLYSKLRKIGEGRPKFVLHDGPPYANGSIHIGHAVNKILKDIITRSKTLAGFDAPYVPGWDCHGLPIEHKVETTFGKNQPADLTRERCRTYASEQIEGQKADFIRLGVLGDWDNPYKTMDFANEAGEIRALAEMVKQGFVFKGLKPVNWCFDCGSALAEAEVEYQDKKSDAIDVAFPIEDADKLAAAFGLSELSKPTAIVIWTTTPWTIPANQALNVHPEFTYALVDTGERILLLAEELVESCLQRYGLQGQVIATAPGAALELIRFRHPFYERFSPVYLAEYVELGAGTGIVHSSPAYGEDDFRTCKAYGMSNDDILSPVQSNGVYTPDLPFFGGQFIWKANPAIVEKLAEVGALLKHQPIQHSYMHCWRHKTPLIYRATAQWFVGMDTQPKQGGTLRERALAAIEQTQFVPAWGQARLHSMIAGRPDWCISRQRNWGVPIPFFLHKATGELHPRTVELMEEVAKRVEQEGIEAWFKLDAAELLGAEAADYDKINDTLDVWFDSGTTHWHVLRGSHGLGHTTGPRADLYLEGSDQHRGWFHSSLLTGSAIDGHAPYKALLTHGFVVDENGRKMSKSLGNVVAPQEVNDSLGADIMRLWVASTDYSGEMAVSKVILQRSADAYRRIRNTARFMLANLNGFDPAKDLLQPEQMLDLDRWAVDAALRLQEEIIEAYADYRFWNVYSKVHNFCVQELGGFYLDIIKDRQYTTAADSVARRSCQSALLHISEALVRWIAPILAFTAEEIWQFLPGERNESVMLNTWYAGLERLPEGFELDRAYWDRVMEVKAAVNKELENLRTAKAIGASLQAEVTLFCDDAKQADLAKLGDELRFALITSAAQTAPLADAPADAVVTEVEGLKLKILKSAHAKCGRCWHFRADVGSHAAHPELCGRCVSNIEGEGEVRKHA.

The short motif at P58 to H68 is the 'HIGH' region element. E567 is an L-isoleucyl-5'-AMP binding site. The 'KMSKS' region signature appears at K608–S612. K611 serves as a coordination point for ATP. Zn(2+) is bound by residues C906, C909, C926, and C929.

The protein belongs to the class-I aminoacyl-tRNA synthetase family. IleS type 1 subfamily. Monomer. Zn(2+) is required as a cofactor.

The protein resides in the cytoplasm. It catalyses the reaction tRNA(Ile) + L-isoleucine + ATP = L-isoleucyl-tRNA(Ile) + AMP + diphosphate. In terms of biological role, catalyzes the attachment of isoleucine to tRNA(Ile). As IleRS can inadvertently accommodate and process structurally similar amino acids such as valine, to avoid such errors it has two additional distinct tRNA(Ile)-dependent editing activities. One activity is designated as 'pretransfer' editing and involves the hydrolysis of activated Val-AMP. The other activity is designated 'posttransfer' editing and involves deacylation of mischarged Val-tRNA(Ile). The sequence is that of Isoleucine--tRNA ligase from Ectopseudomonas mendocina (strain ymp) (Pseudomonas mendocina).